We begin with the raw amino-acid sequence, 276 residues long: UPF0328 protein ECU08_2080 (276 aa).

Residues 1-24 (MGIIDVQRSHLTATPSKERDAPAH) are disordered.

This sequence belongs to the UPF0328 family.

The polypeptide is UPF0328 protein ECU08_2080 (Encephalitozoon cuniculi (strain GB-M1) (Microsporidian parasite)).